Here is a 200-residue protein sequence, read N- to C-terminus: Pyrrolidone-carboxylate peptidase (200 aa).

Active-site residues include E78, C141, and H165.

Belongs to the peptidase C15 family. As to quaternary structure, homotetramer.

The protein resides in the cytoplasm. The enzyme catalyses Release of an N-terminal pyroglutamyl group from a polypeptide, the second amino acid generally not being Pro.. Removes 5-oxoproline from various penultimate amino acid residues except L-proline. This chain is Pyrrolidone-carboxylate peptidase, found in Thermococcus onnurineus (strain NA1).